The following is a 153-amino-acid chain: Ribonuclease H (153 aa).

The region spanning 1–141 is the RNase H type-1 domain; it reads MKLVEIFTDG…CDELAKAGAN (141 aa). Residues Asp9, Glu47, Asp69, and Asp133 each contribute to the Mg(2+) site.

The protein belongs to the RNase H family. As to quaternary structure, monomer. Mg(2+) is required as a cofactor.

Its subcellular location is the cytoplasm. The catalysed reaction is Endonucleolytic cleavage to 5'-phosphomonoester.. Endonuclease that specifically degrades the RNA of RNA-DNA hybrids. The sequence is that of Ribonuclease H from Actinobacillus pleuropneumoniae serotype 5b (strain L20).